The sequence spans 213 residues: Macrodontain-1 (213 aa).

Cystine bridges form between Cys-23-Cys-63, Cys-57-Cys-96, and Cys-153-Cys-201. Cys-26 is a catalytic residue. Active-site residues include His-159 and Asn-176.

In terms of assembly, monomer. Fruits.

With respect to regulation, inhibited by the general cysteine protease inhibitor E64 (L-trans-epoxysuccinyl-leucylamide-(4-guanido)-butane). Its function is as follows. Cysteine protease that catalyzes the preferential cleavage: Ala-|-Xaa &gt; Gln-|-Xaa &gt; Tyr-Xaa &gt;&gt; Leu-|-Xaa &gt; Gly-|-Xaa. Hydrolyzes the synthetic peptide substrate Bz-Phe-Val-Arg-pNA. The protein is Macrodontain-1 of Ananas macrodontes (False pineapple).